A 390-amino-acid chain; its full sequence is Pyruvate dehydrogenase E1 component subunit alpha, somatic form, mitochondrial (390 aa).

The transit peptide at 1–29 (MRKMLAAVSRVLSGASQKPASRVLVASRN) directs the protein to the mitochondrion. Lysine 63 carries the N6-acetyllysine; alternate modification. N6-succinyllysine; alternate is present on lysine 63. Pyruvate is bound by residues histidine 92, tyrosine 118, arginine 119, alanine 157, glycine 165, valine 167, aspartate 196, glycine 197, alanine 198, asparagine 225, and tyrosine 227. Tyrosine 118 and arginine 119 together coordinate thiamine diphosphate. 6 residues coordinate thiamine diphosphate: glycine 165, valine 167, aspartate 196, glycine 197, alanine 198, and asparagine 225. Aspartate 196 is a binding site for Mg(2+). Residues asparagine 225 and tyrosine 227 each contribute to the Mg(2+) site. Phosphoserine; by PDK1 is present on serine 232. At lysine 244 the chain carries N6-acetyllysine; alternate. Residue lysine 244 is modified to N6-succinyllysine; alternate. Lysine 277 is subject to N6-succinyllysine. Histidine 292 is a thiamine diphosphate binding site. Serine 293 carries the post-translational modification Phosphoserine; by PDK1, PDK2, PDK3 and PDK4. Position 295 is a phosphoserine (serine 295). Position 300 is a phosphoserine; by PDK1, PDK2, PDK3 and PDK4 (serine 300). Residue tyrosine 301 is modified to Phosphotyrosine. An N6-acetyllysine; alternate modification is found at lysine 313. N6-succinyllysine; alternate is present on lysine 313. An N6-acetyllysine mark is found at lysine 321 and lysine 336. Lysine 385 carries the N6-succinyllysine modification.

In terms of assembly, heterotetramer of two PDHA1 and two PDHB subunits. The heterotetramer interacts with DLAT, and is part of the multimeric pyruvate dehydrogenase complex that contains multiple copies of pyruvate dehydrogenase (E1), dihydrolipoamide acetyltransferase (DLAT, E2) and lipoamide dehydrogenase (DLD, E3). These subunits are bound to an inner core composed of about 48 DLAT and 12 PDHX molecules. Requires thiamine diphosphate as cofactor. Mg(2+) serves as cofactor. Post-translationally, phosphorylation at Ser-232, Ser-293 and Ser-300 by PDK family kinases inactivates the enzyme; for this phosphorylation at a single site is sufficient. Phosphorylation at Ser-293 interferes with access to active site, and thereby inactivates the enzyme. Dephosphorylation at all three sites, i.e. at Ser-232, Ser-293 and Ser-300, is required for reactivation. In terms of processing, acetylation alters the phosphorylation pattern. Deacetylated by SIRT3.

It is found in the mitochondrion matrix. It carries out the reaction N(6)-[(R)-lipoyl]-L-lysyl-[protein] + pyruvate + H(+) = N(6)-[(R)-S(8)-acetyldihydrolipoyl]-L-lysyl-[protein] + CO2. Its activity is regulated as follows. Pyruvate dehydrogenase activity is inhibited by phosphorylation of PDHA1; it is reactivated by dephosphorylation. Functionally, the pyruvate dehydrogenase complex catalyzes the overall conversion of pyruvate to acetyl-CoA and CO(2), and thereby links the glycolytic pathway to the tricarboxylic cycle. The polypeptide is Pyruvate dehydrogenase E1 component subunit alpha, somatic form, mitochondrial (PDHA1) (Macaca fascicularis (Crab-eating macaque)).